A 117-amino-acid polypeptide reads, in one-letter code: Large ribosomal subunit protein bL20 (117 aa).

Belongs to the bacterial ribosomal protein bL20 family.

Functionally, binds directly to 23S ribosomal RNA and is necessary for the in vitro assembly process of the 50S ribosomal subunit. It is not involved in the protein synthesizing functions of that subunit. This chain is Large ribosomal subunit protein bL20, found in Campylobacter lari (strain RM2100 / D67 / ATCC BAA-1060).